The primary structure comprises 172 residues: 3-hydroxydecanoyl-[acyl-carrier-protein] dehydratase (172 aa).

H71 is an active-site residue.

Belongs to the thioester dehydratase family. FabA subfamily. Homodimer.

It localises to the cytoplasm. The catalysed reaction is a (3R)-hydroxyacyl-[ACP] = a (2E)-enoyl-[ACP] + H2O. The enzyme catalyses (3R)-hydroxydecanoyl-[ACP] = (2E)-decenoyl-[ACP] + H2O. It catalyses the reaction (2E)-decenoyl-[ACP] = (3Z)-decenoyl-[ACP]. It functions in the pathway lipid metabolism; fatty acid biosynthesis. In terms of biological role, necessary for the introduction of cis unsaturation into fatty acids. Catalyzes the dehydration of (3R)-3-hydroxydecanoyl-ACP to E-(2)-decenoyl-ACP and then its isomerization to Z-(3)-decenoyl-ACP. Can catalyze the dehydratase reaction for beta-hydroxyacyl-ACPs with saturated chain lengths up to 16:0, being most active on intermediate chain length. The protein is 3-hydroxydecanoyl-[acyl-carrier-protein] dehydratase of Aliivibrio salmonicida (strain LFI1238) (Vibrio salmonicida (strain LFI1238)).